Here is a 512-residue protein sequence, read N- to C-terminus: ATP synthase subunit alpha (512 aa).

Glycine 169–threonine 176 is a binding site for ATP.

This sequence belongs to the ATPase alpha/beta chains family. In terms of assembly, F-type ATPases have 2 components, CF(1) - the catalytic core - and CF(0) - the membrane proton channel. CF(1) has five subunits: alpha(3), beta(3), gamma(1), delta(1), epsilon(1). CF(0) has three main subunits: a(1), b(2) and c(9-12). The alpha and beta chains form an alternating ring which encloses part of the gamma chain. CF(1) is attached to CF(0) by a central stalk formed by the gamma and epsilon chains, while a peripheral stalk is formed by the delta and b chains.

It is found in the cell membrane. The catalysed reaction is ATP + H2O + 4 H(+)(in) = ADP + phosphate + 5 H(+)(out). Functionally, produces ATP from ADP in the presence of a proton gradient across the membrane. The alpha chain is a regulatory subunit. This is ATP synthase subunit alpha from Buchnera aphidicola subsp. Acyrthosiphon pisum (strain Tuc7).